A 798-amino-acid chain; its full sequence is Cold shock domain-containing protein E1 (798 aa).

In terms of domain architecture, CSD 1 spans 26 to 87 (ETGVIEKLLT…RTGKPIAIKL (62 aa)). At lysine 81 the chain carries N6-acetyllysine. Lysine 91 participates in a covalent cross-link: Glycyl lysine isopeptide (Lys-Gly) (interchain with G-Cter in SUMO2). Serine 123 carries the post-translational modification Phosphoserine. Positions 136–179 (VFYLTYTSEDVEGNVQLETGDKINFVIDNNKHTGAVSARNIMLL) constitute a CSD 2; truncated domain. In terms of domain architecture, CSD 3 spans 186–245 (CQGVVCAMKEAFGFIERGDVVKEIFFHYSEFKGDLETLQPGDDVEFTIKDRNGKEVATDV). Serine 276 carries the phosphoserine modification. One can recognise a CSD 4; truncated domain in the interval 297–337 (LPFGDKDTKSKVTLLEGDHVRFNISTDRRDKLERATNIEVL). CSD domains are found at residues 349–410 (EMGV…AIRI) and 447–507 (NKGK…ATCV). At serine 514 the chain carries Phosphoserine. A CSD 7 domain is found at 519–579 (LLGYVATLKD…KGNKVSAEKV (61 aa)). Serine 584 is subject to Phosphoserine. 2 CSD domains span residues 610–670 (PTQI…AYNI) and 674–735 (RRAT…ACNV). The SUZ-C domain maps to 748 to 789 (PRPDRLVNRLKNITLDDASAPRLMVLRQPRGPDNSMGFGAER). Threonine 761 carries the phosphothreonine modification.

This sequence belongs to the UNR family. As to quaternary structure, component of a multi subunit autoregulatory ribonucleoprotein complex (ARC), at least composed of IGF2BP1, PABPC1 and CSDE1. Interacts with STRAP. Part of a complex associated with the FOS mCRD domain and consisting of PABPC1, PAIP1, HNRPD and SYNCRIP. The interaction with PABPC1 is direct and RNA-independent. Interacts with EIF4ENIF1/4E-T.

It is found in the cytoplasm. Its subcellular location is the stress granule. It localises to the P-body. Its function is as follows. RNA-binding protein involved in translationally coupled mRNA turnover. Implicated with other RNA-binding proteins in the cytoplasmic deadenylation/translational and decay interplay of the FOS mRNA mediated by the major coding-region determinant of instability (mCRD) domain. Required for efficient formation of stress granules. This is Cold shock domain-containing protein E1 from Mus musculus (Mouse).